We begin with the raw amino-acid sequence, 177 residues long: Probable inosine/xanthosine triphosphatase (177 aa).

Belongs to the YjjX NTPase family. As to quaternary structure, homodimer. The cofactor is Mg(2+). Requires Mn(2+) as cofactor.

The catalysed reaction is XTP + H2O = XDP + phosphate + H(+). It carries out the reaction ITP + H2O = IDP + phosphate + H(+). Phosphatase that hydrolyzes non-canonical purine nucleotides such as XTP and ITP to their respective diphosphate derivatives. Probably excludes non-canonical purines from DNA/RNA precursor pool, thus preventing their incorporation into DNA/RNA and avoiding chromosomal lesions. The chain is Probable inosine/xanthosine triphosphatase from Pyrobaculum arsenaticum (strain DSM 13514 / JCM 11321 / PZ6).